The primary structure comprises 274 residues: Large ribosomal subunit protein uL2cz/uL2cy (274 aa).

The interval 224–274 (NPVDHPHGGGEGRAPIGRKKPATPWGYPALGRRSRKRNKYSDNLILRRRSK) is disordered.

It belongs to the universal ribosomal protein uL2 family. In terms of assembly, part of the 50S ribosomal subunit.

It localises to the plastid. It is found in the chloroplast. This Carica papaya (Papaya) protein is Large ribosomal subunit protein uL2cz/uL2cy (rpl2-A).